The following is a 331-amino-acid chain: Decarboxylase orsB (331 aa).

Zn(2+) is bound by residues H11, H157, and D284.

It belongs to the metallo-dependent hydrolases superfamily. ACMSD family.

The protein operates within secondary metabolite biosynthesis. Functionally, decarboxylase; part of the gene cluster that mediates the biosynthesis of orsellinic acid, as well as of the cathepsin K inhibitors F9775 A and F9775 B. The non-reducing polyketide synthase orsA produces orsellinic acid by condensing acetyl-CoA with 3 malonyl-CoA units. Further modifications by the decarboxylase orsB and the tyrosinase-like protein orsC lead to the production of F9775 A and F9775 B. The functions of orsD and orsE remain unclear since only orsB and orsC are required to convert orsellinic acid into F9775 A and F9775 B. This Emericella nidulans (strain FGSC A4 / ATCC 38163 / CBS 112.46 / NRRL 194 / M139) (Aspergillus nidulans) protein is Decarboxylase orsB.